Here is a 602-residue protein sequence, read N- to C-terminus: MKVITFSRRSALASIVATCLMSTPALAATAQAPQKLQIPTLSYDDHSVMLVWDTPEDTSNITDYQIYQNGQLIGLASQNNDKNSPAKPYISAFYKSDAANFHHRIVLQNAKVDGLKAGTDYQFTVRTVYADGTTSNDSNTVTTTTTAVPKVINITQYGAKGDGTTLNTSAIQKAIDACPTGCRIDVPAGVFKTGALWLKSDMTLNLLQGATLLGSDNAADYPDAYKIYSYVSQVRPASLLNAIDKNSSAVGTFKNIRIVGKGIIDGNGWKRSADAKDELGNTLPQYVKSDNSKVSKDGILAKNQVAAAVATGMDTKTAYSQRRSSLVTLRGVQNAYIADVTIRNPANHGIMFLESENVVENSVIHQTFNANNGDGVEFGNSQNIMVFNSVFDTGDDSINFAAGMGQDAQKQEPSQNAWLFNNFFRHGHGAVVLGSHTGAGIVDVLAENNVITQNDVGLRAKSAPAIGGGAHGIVFRNSAMKNLAKQAVIVTLSYADNNGTIDYTPAKVPARFYDFTVKNVTVQDSTGSNPAIEITGDSSKDIWHSQFIFSNMKLSGVSPTSISDLSDSQFNNLTFSNLRSGSSPWKFGTVKNVTVDGKTVTP.

The N-terminal stretch at 1 to 27 is a signal peptide; the sequence is MKVITFSRRSALASIVATCLMSTPALA. A Fibronectin type-III domain is found at 32–149; the sequence is APQKLQIPTL…TVTTTTTAVP (118 aa). The active-site Proton donor is the D395. H428 is a catalytic residue.

Belongs to the glycosyl hydrolase 28 family.

It is found in the secreted. The catalysed reaction is [(1-&gt;4)-alpha-D-galacturonosyl](n) + H2O = alpha-D-galacturonosyl-(1-&gt;4)-D-galacturonate + [(1-&gt;4)-alpha-D-galacturonosyl](n-2). Its function is as follows. Contributes significantly to bacterial utilization of polygalacturonate and the induction of pectate lyase in the presence of extracellular pectic polymers. The sequence is that of Exo-poly-alpha-D-galacturonosidase (pehX) from Dickeya chrysanthemi (Pectobacterium chrysanthemi).